We begin with the raw amino-acid sequence, 244 residues long: Orotidine 5'-phosphate decarboxylase (244 aa).

Substrate is bound by residues aspartate 20, lysine 42, 70–79 (DLKFFDIPAT), threonine 125, arginine 186, glutamine 195, glycine 215, and arginine 216. Lysine 72 acts as the Proton donor in catalysis.

Belongs to the OMP decarboxylase family. Type 1 subfamily. In terms of assembly, homodimer.

The catalysed reaction is orotidine 5'-phosphate + H(+) = UMP + CO2. Its pathway is pyrimidine metabolism; UMP biosynthesis via de novo pathway; UMP from orotate: step 2/2. Functionally, catalyzes the decarboxylation of orotidine 5'-monophosphate (OMP) to uridine 5'-monophosphate (UMP). The sequence is that of Orotidine 5'-phosphate decarboxylase from Xylella fastidiosa (strain M12).